The chain runs to 122 residues: Large ribosomal subunit protein bL12 (122 aa).

It belongs to the bacterial ribosomal protein bL12 family. In terms of assembly, homodimer. Part of the ribosomal stalk of the 50S ribosomal subunit. Forms a multimeric L10(L12)X complex, where L10 forms an elongated spine to which 2 to 4 L12 dimers bind in a sequential fashion. Binds GTP-bound translation factors.

Functionally, forms part of the ribosomal stalk which helps the ribosome interact with GTP-bound translation factors. Is thus essential for accurate translation. The polypeptide is Large ribosomal subunit protein bL12 (Cellvibrio japonicus (strain Ueda107) (Pseudomonas fluorescens subsp. cellulosa)).